The following is a 168-amino-acid chain: 2-C-methyl-D-erythritol 2,4-cyclodiphosphate synthase (168 aa).

A divalent metal cation contacts are provided by Asp11 and His13. 4-CDP-2-C-methyl-D-erythritol 2-phosphate contacts are provided by residues 11 to 13 and 38 to 39; these read DVH and HS. His46 is a binding site for a divalent metal cation. Residues 60–62, 133–136, Phe140, and Arg143 each bind 4-CDP-2-C-methyl-D-erythritol 2-phosphate; these read DIG and TTTD.

It belongs to the IspF family. Homotrimer. Requires a divalent metal cation as cofactor.

The enzyme catalyses 4-CDP-2-C-methyl-D-erythritol 2-phosphate = 2-C-methyl-D-erythritol 2,4-cyclic diphosphate + CMP. Its pathway is isoprenoid biosynthesis; isopentenyl diphosphate biosynthesis via DXP pathway; isopentenyl diphosphate from 1-deoxy-D-xylulose 5-phosphate: step 4/6. In terms of biological role, involved in the biosynthesis of isopentenyl diphosphate (IPP) and dimethylallyl diphosphate (DMAPP), two major building blocks of isoprenoid compounds. Catalyzes the conversion of 4-diphosphocytidyl-2-C-methyl-D-erythritol 2-phosphate (CDP-ME2P) to 2-C-methyl-D-erythritol 2,4-cyclodiphosphate (ME-CPP) with a corresponding release of cytidine 5-monophosphate (CMP). The chain is 2-C-methyl-D-erythritol 2,4-cyclodiphosphate synthase from Cutibacterium acnes (strain DSM 16379 / KPA171202) (Propionibacterium acnes).